The chain runs to 807 residues: Leucine--tRNA ligase (807 aa).

Positions 38–49 (PYPSGSGLHVGH) match the 'HIGH' region motif. Positions 579 to 583 (KMSKS) match the 'KMSKS' region motif. K582 is a binding site for ATP.

The protein belongs to the class-I aminoacyl-tRNA synthetase family.

It localises to the cytoplasm. The enzyme catalyses tRNA(Leu) + L-leucine + ATP = L-leucyl-tRNA(Leu) + AMP + diphosphate. This Mycoplasmopsis pulmonis (strain UAB CTIP) (Mycoplasma pulmonis) protein is Leucine--tRNA ligase.